The chain runs to 506 residues: Hexokinase-6 (506 aa).

A helical transmembrane segment spans residues 6-26 (VVGTAVVVCAAAAAAVGVAVV). The region spanning 43 to 497 (RRAAAVIEEV…SGIGAALLAA (455 aa)) is the Hexokinase domain. The tract at residues 98-236 (TGDEHGLFYA…GLDMKVTALV (139 aa)) is hexokinase small subdomain. Glycine 112, threonine 113, and asparagine 114 together coordinate ADP. Residues threonine 202, lysine 203, asparagine 237, and aspartate 238 each contribute to the D-glucose site. The hexokinase large subdomain stretch occupies residues 237 to 486 (NDTVGTLAGG…SSVVVKLAND (250 aa)). Position 261 (threonine 261) interacts with ADP. D-glucose contacts are provided by asparagine 264, glutamate 292, and glutamate 323. Position 451 (glycine 451) interacts with ADP.

The protein belongs to the hexokinase family. As to expression, expressed in roots, leaves, flowers, immature seeds and endosperm.

It is found in the plastid. The protein resides in the chloroplast outer membrane. It carries out the reaction a D-hexose + ATP = a D-hexose 6-phosphate + ADP + H(+). It catalyses the reaction D-fructose + ATP = D-fructose 6-phosphate + ADP + H(+). The enzyme catalyses D-glucose + ATP = D-glucose 6-phosphate + ADP + H(+). It participates in carbohydrate metabolism; hexose metabolism. It functions in the pathway carbohydrate degradation; glycolysis; D-glyceraldehyde 3-phosphate and glycerone phosphate from D-glucose: step 1/4. Functionally, fructose and glucose phosphorylating enzyme. Functions as a glucose sensor for plant growth and photosynthesis. In Oryza sativa subsp. japonica (Rice), this protein is Hexokinase-6 (HXK6).